Reading from the N-terminus, the 225-residue chain is Uracil-DNA glycosylase (225 aa).

The active-site Proton acceptor is the Asp-68.

The protein belongs to the uracil-DNA glycosylase (UDG) superfamily. UNG family.

The protein resides in the cytoplasm. The catalysed reaction is Hydrolyzes single-stranded DNA or mismatched double-stranded DNA and polynucleotides, releasing free uracil.. In terms of biological role, excises uracil residues from the DNA which can arise as a result of misincorporation of dUMP residues by DNA polymerase or due to deamination of cytosine. The sequence is that of Uracil-DNA glycosylase from Mycolicibacterium gilvum (strain PYR-GCK) (Mycobacterium gilvum (strain PYR-GCK)).